A 160-amino-acid polypeptide reads, in one-letter code: Phosphopantetheine adenylyltransferase (160 aa).

S10 contributes to the substrate binding site. ATP-binding positions include S10–F11 and H18. The substrate site is built by K42, T74, and R88. Residues G89–R91, E99, and Y124–T130 each bind ATP.

This sequence belongs to the bacterial CoaD family. In terms of assembly, homohexamer. The cofactor is Mg(2+).

It localises to the cytoplasm. The enzyme catalyses (R)-4'-phosphopantetheine + ATP + H(+) = 3'-dephospho-CoA + diphosphate. The protein operates within cofactor biosynthesis; coenzyme A biosynthesis; CoA from (R)-pantothenate: step 4/5. Its function is as follows. Reversibly transfers an adenylyl group from ATP to 4'-phosphopantetheine, yielding dephospho-CoA (dPCoA) and pyrophosphate. This is Phosphopantetheine adenylyltransferase from Leptospira biflexa serovar Patoc (strain Patoc 1 / Ames).